The chain runs to 511 residues: Glutamate/gamma-aminobutyrate antiporter (511 aa).

Topologically, residues Met1–Leu13 are cytoplasmic. A helical transmembrane segment spans residues Thr14 to Ala36. Residues Thr37 to Phe40 are Periplasmic-facing. Residues Ser41–Met64 form a helical membrane-spanning segment. Residues Ala65–Pro85 lie on the Cytoplasmic side of the membrane. A helical transmembrane segment spans residues Arg86–Gly112. The Periplasmic portion of the chain corresponds to Ala113–Asp126. Residues Pro127–Gly147 form a helical membrane-spanning segment. Topologically, residues Gly148 to Tyr151 are cytoplasmic. The chain crosses the membrane as a helical span at residues Thr152 to His180. Residues Ser181–Val201 are Periplasmic-facing. Residues Gly202–Asn225 traverse the membrane as a helical segment. The Cytoplasmic portion of the chain corresponds to Glu226–Asn229. Residues Pro230–Val259 traverse the membrane as a helical segment. Residues Ile260 to Trp288 are Periplasmic-facing. A helical membrane pass occupies residues Thr289–Lys322. Residues Asn323–Val337 are Cytoplasmic-facing. The helical transmembrane segment at Pro338 to Thr359 threads the bilayer. Residues Gly360–Gly362 are Periplasmic-facing. The helical transmembrane segment at Asn363–His396 threads the bilayer. Over Pro397–Lys409 the chain is Cytoplasmic. Residues Gly410–Ser430 traverse the membrane as a helical segment. Residues Phe431–Asp443 lie on the Periplasmic side of the membrane. Residues Met444–His467 traverse the membrane as a helical segment. The Cytoplasmic portion of the chain corresponds to Asp468–His511.

This sequence belongs to the amino acid-polyamine-organocation (APC) superfamily. Glutamate:GABA antiporter (GGA) (TC 2.A.3.7) family. As to quaternary structure, monomer.

The protein resides in the cell inner membrane. The enzyme catalyses 4-aminobutanoate(in) + L-glutamate(out) = 4-aminobutanoate(out) + L-glutamate(in). Its activity is regulated as follows. Shows pH-dependent activity. The Glu/GABA transport activity is robust at pH 4.5 and rapidly decreases with increasing pH, with no detectable activity at pH 6.5 or above. The Glu analog L-trans-pyrrolidine-2,4-dicarboxylic acid (L-PDC) blocks the uptake of glutamate by selective inhibition. Involved in glutaminase-dependent acid resistance. Exchanges extracellular glutamate (Glu) for intracellular gamma-aminobutyric acid (GABA) under acidic conditions. The protonation states of substrates are crucial for transport. Selectively transports Glu with no net charge and GABA with a positive charge. Also efficiently transports glutamine and, to a smaller extent, methionine and leucine. When the extracellular pH drops below 2.5, can import L-glutamine and export either glutamate or GABA. The ability to survive the extremely acidic conditions of the stomach is essential for successful colonization of the host by commensal and pathogenic bacteria. In Escherichia coli (strain K12), this protein is Glutamate/gamma-aminobutyrate antiporter.